The sequence spans 138 residues: Cysteine desulfuration protein SufE (138 aa).

Cys-51 (cysteine persulfide intermediate) is an active-site residue.

Belongs to the SufE family. As to quaternary structure, homodimer. Interacts with SufS.

The protein localises to the cytoplasm. It participates in cofactor biosynthesis; iron-sulfur cluster biosynthesis. In terms of biological role, participates in cysteine desulfuration mediated by SufS. Cysteine desulfuration mobilizes sulfur from L-cysteine to yield L-alanine and constitutes an essential step in sulfur metabolism for biosynthesis of a variety of sulfur-containing biomolecules. Functions as a sulfur acceptor for SufS, by mediating the direct transfer of the sulfur atom from the S-sulfanylcysteine of SufS, an intermediate product of cysteine desulfuration process. The protein is Cysteine desulfuration protein SufE of Citrobacter koseri (strain ATCC BAA-895 / CDC 4225-83 / SGSC4696).